A 56-amino-acid chain; its full sequence is Large ribosomal subunit protein bL32 (56 aa).

Basic residues predominate over residues 1 to 16 (MAVQKSKKSRSRRGMR). Residues 1–38 (MAVQKSKKSRSRRGMRRSHDAVTPENLSVDPVSGETHR) are disordered.

Belongs to the bacterial ribosomal protein bL32 family.

The protein is Large ribosomal subunit protein bL32 of Colwellia psychrerythraea (strain 34H / ATCC BAA-681) (Vibrio psychroerythus).